Here is a 426-residue protein sequence, read N- to C-terminus: Serine--tRNA ligase (426 aa).

233–235 is an L-serine binding site; it reads TAE. 264 to 266 serves as a coordination point for ATP; that stretch reads RSE. E287 contributes to the L-serine binding site. 351-354 contacts ATP; it reads EISS. An L-serine-binding site is contributed by S387.

This sequence belongs to the class-II aminoacyl-tRNA synthetase family. Type-1 seryl-tRNA synthetase subfamily. Homodimer. The tRNA molecule binds across the dimer.

It is found in the cytoplasm. The catalysed reaction is tRNA(Ser) + L-serine + ATP = L-seryl-tRNA(Ser) + AMP + diphosphate + H(+). It catalyses the reaction tRNA(Sec) + L-serine + ATP = L-seryl-tRNA(Sec) + AMP + diphosphate + H(+). The protein operates within aminoacyl-tRNA biosynthesis; selenocysteinyl-tRNA(Sec) biosynthesis; L-seryl-tRNA(Sec) from L-serine and tRNA(Sec): step 1/1. In terms of biological role, catalyzes the attachment of serine to tRNA(Ser). Is also able to aminoacylate tRNA(Sec) with serine, to form the misacylated tRNA L-seryl-tRNA(Sec), which will be further converted into selenocysteinyl-tRNA(Sec). The sequence is that of Serine--tRNA ligase from Clostridium tetani (strain Massachusetts / E88).